Consider the following 291-residue polypeptide: Acetylglutamate kinase (291 aa).

Residues 64–65 (GG), arginine 86, and asparagine 190 contribute to the substrate site.

This sequence belongs to the acetylglutamate kinase family. ArgB subfamily.

Its subcellular location is the cytoplasm. It carries out the reaction N-acetyl-L-glutamate + ATP = N-acetyl-L-glutamyl 5-phosphate + ADP. It functions in the pathway amino-acid biosynthesis; L-arginine biosynthesis; N(2)-acetyl-L-ornithine from L-glutamate: step 2/4. Its function is as follows. Catalyzes the ATP-dependent phosphorylation of N-acetyl-L-glutamate. This chain is Acetylglutamate kinase, found in Leptospira borgpetersenii serovar Hardjo-bovis (strain JB197).